The sequence spans 650 residues: Multiheme cytochrome MtrC (650 aa).

A signal peptide spans 1-21 (MMNAQTTKIALLLAASAVTMA).

The chain is Multiheme cytochrome MtrC (mtrC) from Shewanella baltica (strain OS185).